The primary structure comprises 850 residues: Receptor-like serine/threonine-protein kinase SD1-8 (850 aa).

The N-terminal stretch at 1 to 26 (MRGLPNFYHSYTFFFFFLLILFPAYS) is a signal peptide. Residues 27–441 (ISANTLSASE…LEDKRNRSAK (415 aa)) are Extracellular-facing. Positions 31–153 (TLSASESLTI…KNSAPDGVLW (123 aa)) constitute a Bulb-type lectin domain. 3 N-linked (GlcNAc...) asparagine glycosylation sites follow: Asn-43, Asn-118, and Asn-242. An EGF-like domain is found at 292-328 (PKDQCDEYKECGVYGYCDSNTSPVCNCIKGFKPRNPQ). Intrachain disulfides connect Cys-296-Cys-308, Cys-302-Cys-316, Cys-378-Cys-403, and Cys-382-Cys-388. Residues 347-428 (CGGGDGFVRL…GGQDLYVRLA (82 aa)) enclose the PAN domain. N-linked (GlcNAc...) asparagine glycans are attached at residues Asn-387 and Asn-437. A helical transmembrane segment spans residues 442–462 (IIGSSIGVSVLLLLSFIIFFL). The Cytoplasmic segment spans residues 463 to 850 (WKRKQKRSIL…QITVSVLDAR (388 aa)). Positions 526–807 (FSNANKLGQG…LMLGSESTTI (282 aa)) constitute a Protein kinase domain. Residues 532-540 (LGQGGFGIV) and Lys-554 each bind ATP. Residues 615 to 632 (SRNSKLNWQMRFDIINGI) are caM-binding. Asp-651 functions as the Proton acceptor in the catalytic mechanism.

The protein belongs to the protein kinase superfamily. Ser/Thr protein kinase family. Interacts with PUB9, PUB13, PUB14 and PUB38. In terms of tissue distribution, expressed in the root-hypocotyl transition zone, at the base of lateral roots, axillary buds and pedicels.

Its subcellular location is the cell membrane. It carries out the reaction L-seryl-[protein] + ATP = O-phospho-L-seryl-[protein] + ADP + H(+). The enzyme catalyses L-threonyl-[protein] + ATP = O-phospho-L-threonyl-[protein] + ADP + H(+). Involved in the regulation of cellular expansion and differentiation. This is Receptor-like serine/threonine-protein kinase SD1-8 (SD18) from Arabidopsis thaliana (Mouse-ear cress).